A 329-amino-acid chain; its full sequence is UDP-N-acetylenolpyruvoylglucosamine reductase (329 aa).

The FAD-binding PCMH-type domain maps to 28 to 192 (RVGGPADLLC…ARVEVRLHPG (165 aa)). Arginine 172 is a catalytic residue. Serine 221 acts as the Proton donor in catalysis. Glutamate 291 is a catalytic residue. Positions 307–329 (DGHAAAGGGPGAASGGVRPPEAT) are disordered. Over residues 311–320 (AAGGGPGAAS) the composition is skewed to gly residues.

It belongs to the MurB family. FAD serves as cofactor.

The protein resides in the cytoplasm. It carries out the reaction UDP-N-acetyl-alpha-D-muramate + NADP(+) = UDP-N-acetyl-3-O-(1-carboxyvinyl)-alpha-D-glucosamine + NADPH + H(+). It functions in the pathway cell wall biogenesis; peptidoglycan biosynthesis. Its function is as follows. Cell wall formation. This is UDP-N-acetylenolpyruvoylglucosamine reductase from Anaeromyxobacter dehalogenans (strain 2CP-1 / ATCC BAA-258).